The primary structure comprises 537 residues: Phosphoenolpyruvate carboxykinase (ATP) (537 aa).

The substrate site is built by Arg61, Tyr194, and Lys200. ATP is bound by residues Lys200, His219, and 235 to 243 (GLSGTGKTT). Mn(2+)-binding residues include Lys200 and His219. Asp256 is a Mn(2+) binding site. 3 residues coordinate ATP: Glu284, Arg322, and Thr448. A substrate-binding site is contributed by Arg322.

This sequence belongs to the phosphoenolpyruvate carboxykinase (ATP) family. It depends on Mn(2+) as a cofactor.

The protein resides in the cytoplasm. It catalyses the reaction oxaloacetate + ATP = phosphoenolpyruvate + ADP + CO2. The protein operates within carbohydrate biosynthesis; gluconeogenesis. Involved in the gluconeogenesis. Catalyzes the conversion of oxaloacetate (OAA) to phosphoenolpyruvate (PEP) through direct phosphoryl transfer between the nucleoside triphosphate and OAA. This is Phosphoenolpyruvate carboxykinase (ATP) from Bradyrhizobium sp. (strain BTAi1 / ATCC BAA-1182).